We begin with the raw amino-acid sequence, 60 residues long: Large ribosomal subunit protein bL32 (60 aa).

Positions 1-46 (MAVQQNKKSPSKRGMHRSHNALNTPGTAIEPTTGEVHLRHHISPTG) are disordered. Positions 9–19 (SPSKRGMHRSH) are enriched in basic residues.

This sequence belongs to the bacterial ribosomal protein bL32 family.

The chain is Large ribosomal subunit protein bL32 from Leptothrix cholodnii (strain ATCC 51168 / LMG 8142 / SP-6) (Leptothrix discophora (strain SP-6)).